The sequence spans 118 residues: Ferredoxin-thioredoxin reductase, catalytic chain (118 aa).

Cys57 is a binding site for [4Fe-4S] cluster. Cys59 serves as the catalytic Nucleophile. Cys59 and Cys89 form a disulfide bridge. 3 residues coordinate [4Fe-4S] cluster: Cys76, Cys78, and Cys87.

This sequence belongs to the ferredoxin thioredoxin reductase beta subunit family. As to quaternary structure, heterodimer of subunit A (variable subunit) and subunit B (catalytic subunit). Heterodimeric FTR forms a complex with ferredoxin and thioredoxin. The cofactor is [4Fe-4S] cluster.

It localises to the plastid. It is found in the chloroplast. It catalyses the reaction [thioredoxin]-disulfide + 2 reduced [2Fe-2S]-[ferredoxin] + 2 H(+) = [thioredoxin]-dithiol + 2 oxidized [2Fe-2S]-[ferredoxin]. Its function is as follows. Catalytic subunit of the ferredoxin-thioredoxin reductase (FTR), which catalyzes the two-electron reduction of thioredoxins by the electrons provided by reduced ferredoxin. The chain is Ferredoxin-thioredoxin reductase, catalytic chain (ftrB) from Porphyra purpurea (Red seaweed).